Consider the following 637-residue polypeptide: Multicopper oxidase LPR1 homolog 5 (637 aa).

Positions 1 to 21 (MSPRIQQLAAVLLAAVVVVAA) are cleaved as a signal peptide. Asn-100 carries an N-linked (GlcNAc...) asparagine glycan. Positions 209 and 211 each coordinate Cu cation. Asn-234 is a glycosylation site (N-linked (GlcNAc...) asparagine). Cu cation is bound by residues His-257 and His-259. N-linked (GlcNAc...) asparagine glycosylation is found at Asn-308, Asn-349, Asn-357, Asn-425, Asn-482, and Asn-516. The 73-residue stretch at 334 to 406 (PYLSVQRRRY…IVDFSRLPAA (73 aa)) folds into the Plastocyanin-like domain. The Cu cation site is built by His-522, His-525, and His-527. The N-linked (GlcNAc...) asparagine glycan is linked to Asn-553. Residues His-618, Cys-619, His-620, His-624, and Met-629 each contribute to the Cu cation site.

It belongs to the multicopper oxidase family. Cu cation serves as cofactor. Highly expressed in roots and basal stems.

The protein resides in the endoplasmic reticulum membrane. Functionally, multicopper oxidase that may play a role in the maintenance of inorganic phosphate homeostasis. The protein is Multicopper oxidase LPR1 homolog 5 of Oryza sativa subsp. japonica (Rice).